The sequence spans 307 residues: tRNA dimethylallyltransferase 2 (307 aa).

Position 9–16 (9–16 (GPTAVGKT)) interacts with ATP. Residue 11 to 16 (TAVGKT) coordinates substrate. An interaction with substrate tRNA region spans residues 34–37 (DSRQ).

The protein belongs to the IPP transferase family. Monomer. The cofactor is Mg(2+).

The enzyme catalyses adenosine(37) in tRNA + dimethylallyl diphosphate = N(6)-dimethylallyladenosine(37) in tRNA + diphosphate. Catalyzes the transfer of a dimethylallyl group onto the adenine at position 37 in tRNAs that read codons beginning with uridine, leading to the formation of N6-(dimethylallyl)adenosine (i(6)A). The protein is tRNA dimethylallyltransferase 2 of Azobacteroides pseudotrichonymphae genomovar. CFP2.